The sequence spans 688 residues: Glycine--tRNA ligase beta subunit (688 aa).

This sequence belongs to the class-II aminoacyl-tRNA synthetase family. As to quaternary structure, tetramer of two alpha and two beta subunits.

The protein localises to the cytoplasm. It carries out the reaction tRNA(Gly) + glycine + ATP = glycyl-tRNA(Gly) + AMP + diphosphate. The protein is Glycine--tRNA ligase beta subunit (glyS) of Haemophilus influenzae (strain ATCC 51907 / DSM 11121 / KW20 / Rd).